Reading from the N-terminus, the 726-residue chain is Catalase-peroxidase (726 aa).

The tryptophyl-tyrosyl-methioninium (Trp-Tyr) (with M-240) cross-link spans 91 to 214; it reads WHSAGTYRIA…LGAVQMGLIY (124 aa). H92 serves as the catalytic Proton acceptor. The segment at residues 214 to 240 is a cross-link (tryptophyl-tyrosyl-methioninium (Tyr-Met) (with W-91)); it reads YVNPEGPNGNPDPLAAARDIRETFARM. Heme b is bound at residue H255. The tract at residues 335–362 is disordered; it reads AHQWRPKAGAGADSVPDPHDPNKRRTPS.

It belongs to the peroxidase family. Peroxidase/catalase subfamily. In terms of assembly, homodimer or homotetramer. Heme b serves as cofactor. Post-translationally, formation of the three residue Trp-Tyr-Met cross-link is important for the catalase, but not the peroxidase activity of the enzyme.

It catalyses the reaction H2O2 + AH2 = A + 2 H2O. The enzyme catalyses 2 H2O2 = O2 + 2 H2O. Functionally, bifunctional enzyme with both catalase and broad-spectrum peroxidase activity. This Pseudomonas fluorescens (strain ATCC BAA-477 / NRRL B-23932 / Pf-5) protein is Catalase-peroxidase.